We begin with the raw amino-acid sequence, 181 residues long: Ribosome-recycling factor (181 aa).

Positions 135–160 are disordered; sequence MDDIKKDKDMPEDDARKAEDQTQKLT.

Belongs to the RRF family.

The protein localises to the cytoplasm. In terms of biological role, responsible for the release of ribosomes from messenger RNA at the termination of protein biosynthesis. May increase the efficiency of translation by recycling ribosomes from one round of translation to another. The chain is Ribosome-recycling factor from Leuconostoc mesenteroides subsp. mesenteroides (strain ATCC 8293 / DSM 20343 / BCRC 11652 / CCM 1803 / JCM 6124 / NCDO 523 / NBRC 100496 / NCIMB 8023 / NCTC 12954 / NRRL B-1118 / 37Y).